The sequence spans 1070 residues: Probable arabinosyltransferase C (1070 aa).

12 consecutive transmembrane segments (helical) span residues 10 to 32 (IARLLAVIAGLLGALLAMATPFL), 210 to 232 (LLKTIAMILGVVLTIVALVALHL), 247 to 269 (SRWWSIGCLDGLVITILAWWHFV), 399 to 421 (VATSRLLPVAVACIVGALTLFSG), 425 to 442 (IASIGALLVAVGPLLTIL), 449 to 471 (FGAVPLVAPILAASTVTAILIFR), 512 to 534 (SVARRFAVLALLVALSVAVAMSL), 547 to 564 (SRRIIGITVTSFLAMMFT), 574 to 596 (VFAGLAGSLGALAAVAVASAALR), 603 to 625 (VFAAVVLFVVALSFASVNGWWYV), 645 to 664 (TALLELTVIVLLLAAWFHFV), and 685 to 707 (SPIAIATWSLVIFEVASLTMAMI).

This sequence belongs to the emb family.

It localises to the cell membrane. Its function is as follows. Arabinosyl transferase responsible for the polymerization of arabinose into the arabinan of arabinogalactan. The sequence is that of Probable arabinosyltransferase C (embC) from Mycobacterium leprae (strain TN).